Consider the following 554-residue polypeptide: Glucose-6-phosphate isomerase (554 aa).

Glutamate 358 acts as the Proton donor in catalysis. Residues histidine 389 and lysine 515 contribute to the active site. A compositionally biased stretch (polar residues) spans 527–540 (SDGSPQRQSDSSTD). The tract at residues 527–554 (SDGSPQRQSDSSTDALVRRYRTQRGRTG) is disordered. Basic residues predominate over residues 544–554 (RRYRTQRGRTG).

It belongs to the GPI family.

Its subcellular location is the cytoplasm. The catalysed reaction is alpha-D-glucose 6-phosphate = beta-D-fructose 6-phosphate. It participates in carbohydrate biosynthesis; gluconeogenesis. Its pathway is carbohydrate degradation; glycolysis; D-glyceraldehyde 3-phosphate and glycerone phosphate from D-glucose: step 2/4. Catalyzes the reversible isomerization of glucose-6-phosphate to fructose-6-phosphate. The chain is Glucose-6-phosphate isomerase from Mycobacterium ulcerans (strain Agy99).